The primary structure comprises 228 residues: 3-dehydroquinate dehydratase (228 aa).

Residues Ser26, 51–53 (EIR), and Arg84 each bind 3-dehydroquinate. His127 functions as the Proton donor/acceptor in the catalytic mechanism. The active-site Schiff-base intermediate with substrate is the Lys150. 3-dehydroquinate-binding residues include Arg190, Thr209, and Gln213.

Belongs to the type-I 3-dehydroquinase family. Homodimer.

The catalysed reaction is 3-dehydroquinate = 3-dehydroshikimate + H2O. It functions in the pathway metabolic intermediate biosynthesis; chorismate biosynthesis; chorismate from D-erythrose 4-phosphate and phosphoenolpyruvate: step 3/7. In terms of biological role, involved in the third step of the chorismate pathway, which leads to the biosynthesis of aromatic amino acids. Catalyzes the cis-dehydration of 3-dehydroquinate (DHQ) and introduces the first double bond of the aromatic ring to yield 3-dehydroshikimate. The sequence is that of 3-dehydroquinate dehydratase from Thermoplasma acidophilum (strain ATCC 25905 / DSM 1728 / JCM 9062 / NBRC 15155 / AMRC-C165).